We begin with the raw amino-acid sequence, 562 residues long: DNA-binding protein MutS2 (562 aa).

380 to 387 (GANSGGKT) is an ATP binding site.

This sequence belongs to the DNA mismatch repair MutS family. Archaeal Muts2 subfamily. As to quaternary structure, multimer. Requires Co(2+) as cofactor. The cofactor is Mn(2+).

In terms of biological role, has ATPase and non-specific DNA-binding activities. May be involved in recombination and/or recombinational repair. Not involved in mismatch repair. This is DNA-binding protein MutS2 from Pyrococcus furiosus (strain ATCC 43587 / DSM 3638 / JCM 8422 / Vc1).